The primary structure comprises 115 residues: Large ribosomal subunit protein bL20c (115 aa).

It belongs to the bacterial ribosomal protein bL20 family.

It is found in the plastid. The protein resides in the chloroplast. In terms of biological role, binds directly to 23S ribosomal RNA and is necessary for the in vitro assembly process of the 50S ribosomal subunit. It is not involved in the protein synthesizing functions of that subunit. The sequence is that of Large ribosomal subunit protein bL20c from Pleurastrum terricola (Filamentous green alga).